Reading from the N-terminus, the 350-residue chain is Nuclear pore complex-interacting protein family member A3 (350 aa).

The disordered stretch occupies residues 306–325 (KTPPECLLTPLPPSAPPSVD).

This sequence belongs to the NPIP family.

In Homo sapiens (Human), this protein is Nuclear pore complex-interacting protein family member A3 (NPIPA3).